Reading from the N-terminus, the 213-residue chain is Pyridoxine/pyridoxamine 5'-phosphate oxidase (213 aa).

Substrate contacts are provided by residues 9 to 12 and Lys67; that span reads RLEY. FMN contacts are provided by residues 62–67, 77–78, Arg83, Lys84, and Gln106; these read RIVLLK and YT. Residues Tyr124, Arg128, and Ser132 each contribute to the substrate site. Residues 141–142 and Trp185 contribute to the FMN site; that span reads QS. 191–193 contacts substrate; that stretch reads RLH. Arg195 is an FMN binding site.

Belongs to the pyridoxamine 5'-phosphate oxidase family. Homodimer. FMN serves as cofactor.

The enzyme catalyses pyridoxamine 5'-phosphate + O2 + H2O = pyridoxal 5'-phosphate + H2O2 + NH4(+). It carries out the reaction pyridoxine 5'-phosphate + O2 = pyridoxal 5'-phosphate + H2O2. Its pathway is cofactor metabolism; pyridoxal 5'-phosphate salvage; pyridoxal 5'-phosphate from pyridoxamine 5'-phosphate: step 1/1. It participates in cofactor metabolism; pyridoxal 5'-phosphate salvage; pyridoxal 5'-phosphate from pyridoxine 5'-phosphate: step 1/1. Functionally, catalyzes the oxidation of either pyridoxine 5'-phosphate (PNP) or pyridoxamine 5'-phosphate (PMP) into pyridoxal 5'-phosphate (PLP). This Chromobacterium violaceum (strain ATCC 12472 / DSM 30191 / JCM 1249 / CCUG 213 / NBRC 12614 / NCIMB 9131 / NCTC 9757 / MK) protein is Pyridoxine/pyridoxamine 5'-phosphate oxidase.